A 115-amino-acid polypeptide reads, in one-letter code: Colicin-Ib immunity protein (115 aa).

3 helical membrane passes run 7 to 27 (VKYL…FYLG), 38 to 58 (FYAF…MRII), and 87 to 107 (IFEL…LIFI).

It localises to the cell membrane. In terms of biological role, this protein is able to protect a cell, which harbors the plasmid IncI1 ColIb-P9 encoding colicin Ib, against colicin Ib. This Escherichia coli protein is Colicin-Ib immunity protein.